The chain runs to 65 residues: Small ribosomal subunit protein bS21 (65 aa).

Belongs to the bacterial ribosomal protein bS21 family.

This Aster yellows phytoplasma protein is Small ribosomal subunit protein bS21.